The sequence spans 272 residues: NADPH-dependent 7-cyano-7-deazaguanine reductase (272 aa).

80–82 (VES) is a binding site for substrate. Residue 82 to 83 (SK) coordinates NADPH. Residue C178 is the Thioimide intermediate of the active site. D185 acts as the Proton donor in catalysis. 217–218 (AE) contributes to the substrate binding site. NADPH is bound at residue 246 to 247 (RG).

Belongs to the GTP cyclohydrolase I family. QueF type 2 subfamily. In terms of assembly, homodimer.

Its subcellular location is the cytoplasm. It catalyses the reaction 7-aminomethyl-7-carbaguanine + 2 NADP(+) = 7-cyano-7-deazaguanine + 2 NADPH + 3 H(+). Its pathway is tRNA modification; tRNA-queuosine biosynthesis. Functionally, catalyzes the NADPH-dependent reduction of 7-cyano-7-deazaguanine (preQ0) to 7-aminomethyl-7-deazaguanine (preQ1). In Rickettsia typhi (strain ATCC VR-144 / Wilmington), this protein is NADPH-dependent 7-cyano-7-deazaguanine reductase.